The sequence spans 1001 residues: 26S proteasome non-ATPase regulatory subunit 1 homolog B (1001 aa).

Ala-2 is modified (N-acetylalanine). A Glycyl lysine isopeptide (Lys-Gly) (interchain with G-Cter in ubiquitin) cross-link involves residue Lys-166. PC repeat units lie at residues 412-447 (SATA…GGSP), 452-485 (GALY…EVIQ), 487-521 (GACL…VAGE), 522-555 (AAGI…EKII), 557-590 (GLAL…IIRY), 591-626 (GGMY…DVRR), 627-659 (TAVL…PHVR), 661-695 (GAAL…FVRQ), 696-736 (GALI…DTMS), and 739-771 (GAIL…TAVI). 2 disordered regions span residues 853–896 (AKKE…TVEK) and 954–1001 (SLTD…YASP). A compositionally biased stretch (basic and acidic residues) spans 854–863 (KKEAEQKAKA). Ser-889 is modified (phosphoserine). Low complexity predominate over residues 961–985 (STASPAVGAEAAGQAQQAATTSAMA).

This sequence belongs to the proteasome subunit S1 family. As to quaternary structure, component of the 19S regulatory particle (RP/PA700) base subcomplex of the 26S proteasome. The 26S proteasome is composed of a core protease (CP), known as the 20S proteasome, capped at one or both ends by the 19S regulatory particle (RP/PA700). The RP/PA700 complex is composed of at least 17 different subunits in two subcomplexes, the base and the lid, which form the portions proximal and distal to the 20S proteolytic core, respectively.

In terms of biological role, acts as a regulatory subunit of the 26 proteasome which is involved in the ATP-dependent degradation of ubiquitinated proteins. This chain is 26S proteasome non-ATPase regulatory subunit 1 homolog B (RPN2B), found in Arabidopsis thaliana (Mouse-ear cress).